Reading from the N-terminus, the 106-residue chain is Ferredoxin (106 aa).

[3Fe-4S] cluster is bound by residues Cys-8 and Cys-16. 4 residues coordinate [4Fe-4S] cluster: Cys-20, Cys-39, Cys-42, and Cys-45. The region spanning 30–59 (RMLYIHPDECVDCGACEPVCPVEAIYYEDD) is the 4Fe-4S ferredoxin-type domain. [3Fe-4S] cluster is bound at residue Cys-49. Residues 81-106 (PGGASKVGQTDNDPQAIKDLPPQGED) form a disordered region.

The cofactor is [4Fe-4S] cluster. Requires [3Fe-4S] cluster as cofactor.

Its function is as follows. Ferredoxins are iron-sulfur proteins that transfer electrons in a wide variety of metabolic reactions. This Mycolicibacterium smegmatis (Mycobacterium smegmatis) protein is Ferredoxin (fdxA).